The sequence spans 355 residues: Guanine nucleotide-binding protein G(q) subunit alpha (355 aa).

C3 carries the S-palmitoyl cysteine lipid modification. The 324-residue stretch at 32 to 355 folds into the G-alpha domain; it reads KEIKLLLLGT…QHITEVVPGL (324 aa). The G1 motif stretch occupies residues 35–48; that stretch reads KLLLLGTGESGKST. Residues 40–47, 174–180, 199–203, 269–272, and A326 contribute to the GTP site; these read GTGESGKS, LRVRVPT, DVGGQ, and NKKD. Mg(2+) is bound by residues S47 and T180. Residues 172 to 180 are G2 motif; the sequence is DVLRVRVPT. The interval 195–204 is G3 motif; it reads FKMVDVGGQR. A G4 motif region spans residues 265 to 272; sequence ILFLNKKD. The G5 motif stretch occupies residues 324 to 329; that stretch reads TCATDT.

It belongs to the G-alpha family. G(q) subfamily. In terms of assembly, g proteins are composed of 3 units; alpha, beta and gamma. The alpha chain contains the guanine nucleotide binding site.

Guanine nucleotide-binding proteins (G proteins) are involved as modulators or transducers in various transmembrane signaling systems. This is Guanine nucleotide-binding protein G(q) subunit alpha from Geodia cydonium (Sponge).